The sequence spans 347 residues: NADH-ubiquinone oxidoreductase chain 2 (347 aa).

10 helical membrane-spanning segments follow: residues 3–23 (PIVF…VMMS), 25–45 (HWLM…PILM), 59–79 (YFLT…INLM), 111–131 (FHFW…LILL), 149–169 (INLD…GWGG), 178–198 (IMAY…TYNP), 201–221 (TMLN…LLML), 242–262 (SLIL…GFIP), 274–294 (NSII…YFYL), and 325–345 (LLPT…TMSI).

This sequence belongs to the complex I subunit 2 family. As to quaternary structure, core subunit of respiratory chain NADH dehydrogenase (Complex I) which is composed of 45 different subunits. Interacts with TMEM242.

The protein localises to the mitochondrion inner membrane. It carries out the reaction a ubiquinone + NADH + 5 H(+)(in) = a ubiquinol + NAD(+) + 4 H(+)(out). Core subunit of the mitochondrial membrane respiratory chain NADH dehydrogenase (Complex I) which catalyzes electron transfer from NADH through the respiratory chain, using ubiquinone as an electron acceptor. Essential for the catalytic activity and assembly of complex I. This Rhinoceros unicornis (Greater Indian rhinoceros) protein is NADH-ubiquinone oxidoreductase chain 2.